A 131-amino-acid polypeptide reads, in one-letter code: Auxin-responsive protein SAUR77 (131 aa).

Belongs to the ARG7 family.

Functionally, may be involved in the regulation of ethylene receptor signaling. Promotes cell expansion and plant growth. The chain is Auxin-responsive protein SAUR77 from Arabidopsis thaliana (Mouse-ear cress).